Consider the following 116-residue polypeptide: MAGRRGDSEQQLLTPVRIIKILYQSNPYPKPEGTRQARRNRRRRWRARQRQIREISQRVLSSCLGRSTEPVPLQLPPLERLSLNCDEDSGQGTEGELGSPQIPVEPDTVLGSGDKE.

Position 8 is a phosphoserine; by host CK2 (Ser-8). The segment at 18-26 (IIKILYQSN) is homomultimerization. 2 disordered regions span residues 25–49 (SNPY…RARQ) and 82–116 (SLNC…GDKE). The Nuclear localization signal and RNA-binding (RRE) signature appears at 34-50 (TRQARRNRRRRWRARQR). The span at 36 to 49 (QARRNRRRRWRARQ) shows a compositional bias: basic residues. The short motif at 73–84 (LQLPPLERLSLN) is the Nuclear export signal and binding to XPO1 element. Residue Ser-99 is modified to Phosphoserine; by host.

It belongs to the HIV-1 REV protein family. Homomultimer; when bound to the RRE. Multimeric assembly is essential for activity and may involve XPO1. Binds to human KPNB1, XPO1, TNPO1, RANBP5 and IPO7. Interacts with the viral Integrase. Interacts with human KHDRBS1. Interacts with human NAP1; this interaction decreases Rev multimerization and stimulates its activity. Interacts with human DEAD-box helicases DDX3 and DDX24; these interactions may serve for viral RNA export to the cytoplasm and packaging, respectively. Interacts with human PSIP1; this interaction may inhibit HIV-1 DNA integration by promoting dissociation of the Integrase-LEDGF/p75 complex. Asymmetrically arginine dimethylated at one site by host PRMT6. Methylation impairs the RNA-binding activity and export of viral RNA from the nucleus to the cytoplasm. In terms of processing, phosphorylated by protein kinase CK2. Presence of, and maybe binding to the N-terminus of the regulatory beta subunit of CK2 is necessary for CK2-mediated Rev's phosphorylation.

Its subcellular location is the host nucleus. It is found in the host nucleolus. The protein localises to the host cytoplasm. In terms of biological role, escorts unspliced or incompletely spliced viral pre-mRNAs (late transcripts) out of the nucleus of infected cells. These pre-mRNAs carry a recognition sequence called Rev responsive element (RRE) located in the env gene, that is not present in fully spliced viral mRNAs (early transcripts). This function is essential since most viral proteins are translated from unspliced or partially spliced pre-mRNAs which cannot exit the nucleus by the pathway used by fully processed cellular mRNAs. Rev itself is translated from a fully spliced mRNA that readily exits the nucleus. Rev's nuclear localization signal (NLS) binds directly to KPNB1/Importin beta-1 without previous binding to KPNA1/Importin alpha-1. KPNB1 binds to the GDP bound form of RAN (Ran-GDP) and targets Rev to the nucleus. In the nucleus, the conversion from Ran-GDP to Ran-GTP dissociates Rev from KPNB1 and allows Rev's binding to the RRE in viral pre-mRNAs. Rev multimerization on the RRE via cooperative assembly exposes its nuclear export signal (NES) to the surface. Rev can then form a complex with XPO1/CRM1 and Ran-GTP, leading to nuclear export of the complex. Conversion from Ran-GTP to Ran-GDP mediates dissociation of the Rev/RRE/XPO1/RAN complex, so that Rev can return to the nucleus for a subsequent round of export. Beside KPNB1, also seems to interact with TNPO1/Transportin-1, RANBP5/IPO5 and IPO7/RANBP7 for nuclear import. The nucleoporin-like HRB/RIP is an essential cofactor that probably indirectly interacts with Rev to release HIV RNAs from the perinuclear region to the cytoplasm. The protein is Protein Rev of Human immunodeficiency virus type 1 group M subtype K (isolate 97ZR-EQTB11) (HIV-1).